A 325-amino-acid polypeptide reads, in one-letter code: Elongation factor P--(R)-beta-lysine ligase (325 aa).

76–78 (SPE) serves as a coordination point for substrate. ATP contacts are provided by residues 100-102 (RNE) and asparagine 109. Residue tyrosine 118 coordinates substrate. 244-245 (EL) contacts ATP. Glutamate 251 lines the substrate pocket. Glycine 300 provides a ligand contact to ATP.

It belongs to the class-II aminoacyl-tRNA synthetase family. EpmA subfamily. In terms of assembly, homodimer.

It catalyses the reaction D-beta-lysine + L-lysyl-[protein] + ATP = N(6)-((3R)-3,6-diaminohexanoyl)-L-lysyl-[protein] + AMP + diphosphate + H(+). Functionally, with EpmB is involved in the beta-lysylation step of the post-translational modification of translation elongation factor P (EF-P) on 'Lys-34'. Catalyzes the ATP-dependent activation of (R)-beta-lysine produced by EpmB, forming a lysyl-adenylate, from which the beta-lysyl moiety is then transferred to the epsilon-amino group of EF-P 'Lys-34'. This Escherichia coli O139:H28 (strain E24377A / ETEC) protein is Elongation factor P--(R)-beta-lysine ligase.